Reading from the N-terminus, the 369-residue chain is Phenylalanine--tRNA ligase alpha subunit (369 aa).

E272 contributes to the Mg(2+) binding site.

It belongs to the class-II aminoacyl-tRNA synthetase family. Phe-tRNA synthetase alpha subunit type 1 subfamily. As to quaternary structure, tetramer of two alpha and two beta subunits. Mg(2+) is required as a cofactor.

The protein resides in the cytoplasm. It carries out the reaction tRNA(Phe) + L-phenylalanine + ATP = L-phenylalanyl-tRNA(Phe) + AMP + diphosphate + H(+). This Cutibacterium acnes (strain DSM 16379 / KPA171202) (Propionibacterium acnes) protein is Phenylalanine--tRNA ligase alpha subunit.